The following is a 721-amino-acid chain: MTSPKPWARSAGSCQTQRAVRTRKKECREEGESDTEKGPAASSASAQCSFPKRVSFFGWAGALDSSGGTTRAMDEEIVSEKQAEESHRQDSANLLIFILLLTLTILTIWLFKHRRARFLHETGLAMIYGLLVGLVLRYGIHVPSDVNNVTLSCEVQSSPTTLLVNVSGKFYEYTLKGEISSHELNNVQDNEMLRKVTFDPEVFFNILLPPIIFYAGYSLKRRHFFRNLGSILAYAFLGTAISCFVIGSIMYGCVTLMKVTGQLAGDFYFTDCLLFGAIVSATDPVTVLAIFHELQVDVELYALLFGESVLNDAVAIVLSSSIVAYQPAGDNSHTFDVTAMFKSIGIFLGIFSGSFAMGAATGVVTCHVTKFTKLREFQLLETGLFFLMSWSTFLLAEAWGFTGVVAVLFCGITQAHYTYNNLSTESQHRTKQLFELLNFLAENFIFSYMGLTLFTFQNHVFNPTFVVGAFIAIFLGRAANIYPLSLLLNLGRRSKIGSNFQHMMMFAGLRGAMAFALAIRDTATYARQMMFSTTLLIVFFTVWVFGGGTTAMLSCLHIRVGVDSDQEHLGVPDNERRTTKAESAWLFRMWYNFDHNYLKPLLTHSGPPLTTTLPACCGPIARCLTSPQAYENQEQLKDDDSDLILNDGDISLTYGDSTVNTESATASAPRRFMGTSTEDALDRELTFGDHELVIRGTRLVLPMDDSEPALNSLDDTRHSPA.

The interval M1–A44 is disordered. Basic and acidic residues predominate over residues E26–K37. 12 helical membrane passes run S91–F111, G123–P143, V196–G216, I231–Y251, C272–H292, V298–L318, I344–V364, M388–I412, F434–F454, F456–G476, N499–I519, and L535–C555.

The protein belongs to the monovalent cation:proton antiporter 1 (CPA1) transporter (TC 2.A.36) family. Homodimer. Interacts with RACK1; regulates the distribution of SLC9A6 between endosomes and the plasma membrane. Post-translationally, ubiquitinated (in vitro). Glycosylated.

It is found in the endosome membrane. The protein resides in the recycling endosome membrane. It localises to the early endosome membrane. The protein localises to the late endosome membrane. Its subcellular location is the cell membrane. It catalyses the reaction Na(+)(in) + H(+)(out) = Na(+)(out) + H(+)(in). The enzyme catalyses K(+)(in) + H(+)(out) = K(+)(out) + H(+)(in). Endosomal Na(+), K(+)/H(+) antiporter. Mediates the electroneutral exchange of endosomal luminal H(+) for a cytosolic Na(+) or K(+). By facilitating proton efflux, SLC9A6 counteracts the acidity generated by vacuolar (V)-ATPase, thereby limiting luminal acidification. Responsible for alkalizing and maintaining the endosomal pH, and consequently in, e.g., endosome maturation and trafficking of recycling endosomal cargo. Plays a critical role during neurodevelopment by regulating synaptic development and plasticity. Implicated in the maintenance of cell polarity in a manner that is dependent on its ability to modulate intravesicular pH. Regulates intracelular pH in some specialized cells, osteoclasts and stereocilia where this transporter localizes to the plasma membrane. This is Sodium/hydrogen exchanger 6 from Rattus norvegicus (Rat).